The sequence spans 252 residues: Protein lin-28 homolog B (252 aa).

A disordered region spans residues 1–30 (MAEGGAARGTREEQGKLPEQEEEEEEDPQV). The span at 9 to 19 (GTREEQGKLPE) shows a compositional bias: basic and acidic residues. The CSD domain occupies 32-105 (LGSGHCKWFN…GFESLRVTGP (74 aa)). CCHC-type zinc fingers lie at residues 130 to 147 (DRCY…ECNL) and 152 to 169 (KKCH…NCPH). Residues Cys132, Cys135, His140, Cys145, Cys154, Cys157, His162, and Cys167 each contribute to the Zn(2+) site. The tract at residues 172–252 (VPQHPTTSQG…KGPSVQKKKK (81 aa)) is disordered. Positions 213 to 222 (GRSELSERSS) are enriched in basic and acidic residues. The span at 225 to 238 (PQEASLSKISTSPE) shows a compositional bias: polar residues.

It belongs to the lin-28 family.

It localises to the nucleus. It is found in the nucleolus. Functionally, suppressor of specific microRNA (miRNA) biogenesis. Binds target primary miRNA transcripts and sequester them in the nucleolus, away from the microprocessor complex, hence preventing their processing into mature miRNA. The specific interaction with target pri-miRNAs occurs via an 5'-GGAG-3' motif in the pre-miRNA terminal loop. The protein is Protein lin-28 homolog B (lin28b) of Xenopus laevis (African clawed frog).